Reading from the N-terminus, the 61-residue chain is Large ribosomal subunit protein bL28 (61 aa).

Positions 1 to 21 (MAKDYVTGKKTTFGNKRSHAM) are disordered.

Belongs to the bacterial ribosomal protein bL28 family.

This is Large ribosomal subunit protein bL28 from Lactobacillus helveticus (strain DPC 4571).